We begin with the raw amino-acid sequence, 350 residues long: 3-isopropylmalate dehydrogenase (350 aa).

Residue 71 to 84 (GPKWADAPRHLRPE) coordinates NAD(+). Positions 91, 101, 129, and 220 each coordinate substrate. Mg(2+) is bound by residues D220, D244, and D248. 279-291 (GSAPDIAGKGLAN) contacts NAD(+).

The protein belongs to the isocitrate and isopropylmalate dehydrogenases family. LeuB type 1 subfamily. As to quaternary structure, homodimer. Requires Mg(2+) as cofactor. Mn(2+) serves as cofactor.

The protein localises to the cytoplasm. The catalysed reaction is (2R,3S)-3-isopropylmalate + NAD(+) = 4-methyl-2-oxopentanoate + CO2 + NADH. The protein operates within amino-acid biosynthesis; L-leucine biosynthesis; L-leucine from 3-methyl-2-oxobutanoate: step 3/4. Functionally, catalyzes the oxidation of 3-carboxy-2-hydroxy-4-methylpentanoate (3-isopropylmalate) to 3-carboxy-4-methyl-2-oxopentanoate. The product decarboxylates to 4-methyl-2 oxopentanoate. In Caulobacter vibrioides (strain ATCC 19089 / CIP 103742 / CB 15) (Caulobacter crescentus), this protein is 3-isopropylmalate dehydrogenase.